The chain runs to 718 residues: Protein spire homolog 2 (718 aa).

Disordered regions lie at residues 1–22 and 143–166; these read MARA…ARPE and DSSC…EGGP. Low complexity predominate over residues 10 to 21; it reads AAPERAGGAARP. Residues 26 to 207 form the KIND domain; that stretch reads LSLEEVLKVY…RALFVETLEL (182 aa). 3 WH2 domains span residues 251–265, 281–299, and 345–362; these read QLMR…LKKV, PFEM…LRKV, and LHEK…LRPV. Ser374 bears the Phosphoserine mark. The interval 397-434 is disordered; sequence TDTGSGSQRPRPRVLLKAPTLAEMEEMNTSEEEESPCG. Residues 419-432 show a composition bias toward acidic residues; sequence EMEEMNTSEEEESP. 3 positions are modified to phosphoserine: Ser443, Ser445, and Ser479. The segment at 456-518 is disordered; sequence MASGLQSAAQ…SSLSSVDGPE (63 aa). Over residues 496–513 the composition is skewed to low complexity; the sequence is SGQSQPLPSSALPSSLSS. The segment at 538 to 558 is spir-box; it reads LALTVEEVVDVRRVLVKAEME.

Belongs to the spire family. As to expression, detected in oocytes.

It is found in the cytoplasm. Its subcellular location is the cytoskeleton. The protein localises to the cytosol. It localises to the cell membrane. The protein resides in the cytoplasmic vesicle membrane. Acts as an actin nucleation factor, remains associated with the slow-growing pointed end of the new filament. Involved in intracellular vesicle transport along actin fibers, providing a novel link between actin cytoskeleton dynamics and intracellular transport. Required for asymmetric spindle positioning and asymmetric cell division during oocyte meiosis. Required for normal formation of the cleavage furrow and for polar body extrusion during female germ cell meiosis. Also acts in the nucleus: together with SPIRE1 and SPIRE2, promotes assembly of nuclear actin filaments in response to DNA damage in order to facilitate movement of chromatin and repair factors after DNA damage. The chain is Protein spire homolog 2 (Spire2) from Mus musculus (Mouse).